The sequence spans 319 residues: ATP-dependent 6-phosphofructokinase (319 aa).

Position 11 (Gly11) interacts with ATP. 21–25 (RAVVR) contacts ADP. ATP is bound by residues 72-73 (RY) and 102-105 (GDGS). Asp103 is a Mg(2+) binding site. 125–127 (TID) provides a ligand contact to substrate. Asp127 (proton acceptor) is an active-site residue. Arg154 contributes to the ADP binding site. Residues Arg162 and 169 to 171 (MGR) each bind substrate. ADP-binding positions include 185–187 (GAE), Arg211, and 213–215 (KKH). Residues Glu222, Arg243, and 249-252 (HVQR) contribute to the substrate site.

It belongs to the phosphofructokinase type A (PFKA) family. ATP-dependent PFK group I subfamily. Prokaryotic clade 'B1' sub-subfamily. In terms of assembly, homotetramer. Requires Mg(2+) as cofactor.

It is found in the cytoplasm. The enzyme catalyses beta-D-fructose 6-phosphate + ATP = beta-D-fructose 1,6-bisphosphate + ADP + H(+). It participates in carbohydrate degradation; glycolysis; D-glyceraldehyde 3-phosphate and glycerone phosphate from D-glucose: step 3/4. With respect to regulation, allosterically activated by ADP and other diphosphonucleosides, and allosterically inhibited by phosphoenolpyruvate. In terms of biological role, catalyzes the phosphorylation of D-fructose 6-phosphate to fructose 1,6-bisphosphate by ATP, the first committing step of glycolysis. This Listeria monocytogenes serotype 4b (strain CLIP80459) protein is ATP-dependent 6-phosphofructokinase.